The sequence spans 253 residues: Eukaryotic initiation factor 4A-6 (253 aa).

A Helicase ATP-binding domain is found at 1–82 (HVVVGTPGRV…RKFMNKPVRI (82 aa)). The short motif at 30–33 (DEAD) is the DEAD box element. A Helicase C-terminal domain is found at 93 to 253 (GIKQFYVNVD…EELPANVADL (161 aa)).

Belongs to the DEAD box helicase family. eIF4A subfamily. EIF4F is a multi-subunit complex, the composition of which varies with external and internal environmental conditions. It is composed of at least EIF4A, EIF4E and EIF4G.

The catalysed reaction is ATP + H2O = ADP + phosphate + H(+). ATP-dependent RNA helicase which is a subunit of the eIF4F complex involved in cap recognition and is required for mRNA binding to ribosome. In the current model of translation initiation, eIF4A unwinds RNA secondary structures in the 5'-UTR of mRNAs which is necessary to allow efficient binding of the small ribosomal subunit, and subsequent scanning for the initiator codon. The polypeptide is Eukaryotic initiation factor 4A-6 (Nicotiana tabacum (Common tobacco)).